Here is a 287-residue protein sequence, read N- to C-terminus: Ribosomal RNA small subunit methyltransferase I (287 aa).

It belongs to the methyltransferase superfamily. RsmI family.

Its subcellular location is the cytoplasm. The enzyme catalyses cytidine(1402) in 16S rRNA + S-adenosyl-L-methionine = 2'-O-methylcytidine(1402) in 16S rRNA + S-adenosyl-L-homocysteine + H(+). Its function is as follows. Catalyzes the 2'-O-methylation of the ribose of cytidine 1402 (C1402) in 16S rRNA. The protein is Ribosomal RNA small subunit methyltransferase I of Streptococcus pyogenes serotype M18 (strain MGAS8232).